A 465-amino-acid polypeptide reads, in one-letter code: Cysteine--tRNA ligase (465 aa).

Residue Cys30 coordinates Zn(2+). A 'HIGH' region motif is present at residues 32 to 42 (ITVYDYCHVGH). Cys214, His239, and Glu243 together coordinate Zn(2+). Positions 271–275 (KMSKS) match the 'KMSKS' region motif. Lys274 serves as a coordination point for ATP.

It belongs to the class-I aminoacyl-tRNA synthetase family. As to quaternary structure, monomer. It depends on Zn(2+) as a cofactor.

The protein localises to the cytoplasm. The enzyme catalyses tRNA(Cys) + L-cysteine + ATP = L-cysteinyl-tRNA(Cys) + AMP + diphosphate. The polypeptide is Cysteine--tRNA ligase (Burkholderia ambifaria (strain ATCC BAA-244 / DSM 16087 / CCUG 44356 / LMG 19182 / AMMD) (Burkholderia cepacia (strain AMMD))).